The sequence spans 268 residues: MKVKVAILGCSGRMGRNLIQAAHEHASIELVGGSVRTSSSFVDFDLGELAGIGAIGIKTSTTLAQLATADVFIDFTSIETTLENLTWCNENKKALVIGTTGFSDEQVQVIEQAGKTMSVILAPNTSVGVNLMFKLLQVTAKAIGDYTDIEIFEAHHRFKKDAPSGTAVKMGQVIADTLGRDLNKVAVYGREGITGERDRETIGFATVRAGDIVGEHTAFFADLGERLEITHKASSRMTFALGAMRAAFWLKDADAGFYDMQDVLGLKD.

9-14 serves as a coordination point for NAD(+); the sequence is GCSGRM. R36 contributes to the NADP(+) binding site. Residues 98-100 and 122-125 contribute to the NAD(+) site; these read GTT and APNT. Residue H155 is the Proton donor/acceptor of the active site. Residue H156 coordinates (S)-2,3,4,5-tetrahydrodipicolinate. Residue K159 is the Proton donor of the active site. 165-166 lines the (S)-2,3,4,5-tetrahydrodipicolinate pocket; the sequence is GT.

Belongs to the DapB family.

Its subcellular location is the cytoplasm. The enzyme catalyses (S)-2,3,4,5-tetrahydrodipicolinate + NAD(+) + H2O = (2S,4S)-4-hydroxy-2,3,4,5-tetrahydrodipicolinate + NADH + H(+). It carries out the reaction (S)-2,3,4,5-tetrahydrodipicolinate + NADP(+) + H2O = (2S,4S)-4-hydroxy-2,3,4,5-tetrahydrodipicolinate + NADPH + H(+). Its pathway is amino-acid biosynthesis; L-lysine biosynthesis via DAP pathway; (S)-tetrahydrodipicolinate from L-aspartate: step 4/4. Catalyzes the conversion of 4-hydroxy-tetrahydrodipicolinate (HTPA) to tetrahydrodipicolinate. In Colwellia psychrerythraea (strain 34H / ATCC BAA-681) (Vibrio psychroerythus), this protein is 4-hydroxy-tetrahydrodipicolinate reductase.